The sequence spans 145 residues: Toxin Res (145 aa).

Belongs to the MbcT/ParT/Res family. In terms of assembly, homodimer. Forms a complex with cognate antitoxin Xre; the 2 toxin molecules dimerize and each contacts an Xre homodimer. Most Res-Xre contacts are between the antitoxin molecule closest to the toxin.

In terms of biological role, toxic component of a type II toxin-antitoxin (TA) system. Expression in E.coli inhibits cell growth. In vivo it is probably neutralized by cognate antitoxin Xre; this has not been shown upon expression in E.coli. Probably depletes intracellular NAD(+). The sequence is that of Toxin Res from Pseudomonas putida (strain ATCC 47054 / DSM 6125 / CFBP 8728 / NCIMB 11950 / KT2440).